We begin with the raw amino-acid sequence, 501 residues long: Armadillo repeat-containing protein 6 (501 aa).

S64 carries the post-translational modification Phosphoserine. ARM repeat units follow at residues 220–264 (GVLP…HAHN), 274–318 (KGLK…DLGG), 319–369 (LSIL…RAGG), and 370–412 (TESI…VEGG). The residue at position 263 (H263) is a Pros-methylhistidine.

The protein belongs to the ARMC6 family. Methylated at His-263 by METTL9.

The sequence is that of Armadillo repeat-containing protein 6 (ARMC6) from Homo sapiens (Human).